A 512-amino-acid chain; its full sequence is MTAGEDCRTILVAGTASHVGKSTVAAGLCRLLADRGLSVAPFKAQNMSNNARAVPVADGAPPAADPWGEIGVSQYVQARAARTAASTDHNPVLLKPRGDAESQLVVDGRAVGHYSAGSYYESHWADARDAAAAAHARLAADNDVVVAEGAGSIAELNLHDRDLANLETARFADATILLVVDIERGGAFASLHGTLALLPDDIRDRVAGAVITKFRGDRSLLDPGITEIEARTGVPVLGVIPHDDPGLPAEDSVSLPDPSERVVDGGQDGVPDAASVTVAVPHLPHISNFTDLAPLARTPGVRVAYQPLDAPLAAADAVVLPGTKNTVDDLRAAREAGLGRALRAFDGPIVGLCGGYQMLGDRITDAATESTADDLGAVDGVGVLPVETAFQPDKRVEAVTRELADCGALGGATGAVTGYEIHMGRTTVPDGVPQPVGPASAARGRVLGTYLHGLFGNDAARRGFRDAVFAAAGVEQPAPADTPDQSPSDAAAALVDAHVDLDPLGVPPAPDA.

The GATase cobBQ-type domain maps to 275 to 460 (SVTVAVPHLP…LHGLFGNDAA (186 aa)). Cysteine 353 (nucleophile) is an active-site residue. Histidine 452 is an active-site residue.

Belongs to the CobB/CobQ family. CobQ subfamily.

It functions in the pathway cofactor biosynthesis; adenosylcobalamin biosynthesis. Its function is as follows. Catalyzes amidations at positions B, D, E, and G on adenosylcobyrinic A,C-diamide. NH(2) groups are provided by glutamine, and one molecule of ATP is hydrogenolyzed for each amidation. This chain is Probable cobyric acid synthase, found in Halobacterium salinarum (strain ATCC 29341 / DSM 671 / R1).